The primary structure comprises 187 residues: Core-binding factor subunit beta (187 aa).

The residue at position 10 (Ser-10) is a Phosphoserine; by CK2. The segment at Ala-139–Arg-187 is disordered. The span at Glu-144 to Gln-170 shows a compositional bias: basic and acidic residues. Position 159 is a phosphoserine; by PKC (Ser-159).

It belongs to the CBF-beta family. As to quaternary structure, heterodimer with RUNX1, RUNX2 and RUNX3. Interacts with COPRS. Found in a complex with PRMT5 and RUNX1. In terms of tissue distribution, expressed in all tissues tested. Highest level in thymus, but also abundantly expressed in muscle, lung and brain.

The protein resides in the nucleus. In terms of biological role, forms the heterodimeric complex core-binding factor (CBF) with RUNX family proteins (RUNX1, RUNX2, and RUNX3). RUNX members modulate the transcription of their target genes through recognizing the core consensus binding sequence 5'-TGTGGT-3', or very rarely, 5'-TGCGGT-3', within their regulatory regions via their runt domain, while CBFB is a non-DNA-binding regulatory subunit that allosterically enhances the sequence-specific DNA-binding capacity of RUNX. The heterodimers bind to the core site of a number of enhancers and promoters, including murine leukemia virus, polyomavirus enhancer, T-cell receptor enhancers, LCK, IL3 and GM-CSF promoters. CBF complexes repress ZBTB7B transcription factor during cytotoxic (CD8+) T cell development. They bind to RUNX-binding sequence within the ZBTB7B locus acting as transcriptional silencer and allowing for cytotoxic T cell differentiation. This is Core-binding factor subunit beta (Cbfb) from Mus musculus (Mouse).